Reading from the N-terminus, the 372-residue chain is uncharacterized protein (372 aa).

Basic residues-rich tracts occupy residues 1–11 and 38–48; these read MNKILGLRRAK and RLRRGMQRLSR. The interval 1–127 is disordered; sequence MNKILGLRRA…NSGTRDTPCW (127 aa). Basic and acidic residues predominate over residues 50–61; it reads GYGDNRRSRGSE. A compositionally biased stretch (polar residues) spans 93 to 104; it reads GKTSPCGSSGTP.

This is an uncharacterized protein from Psittacid herpesvirus 1 (isolate Amazon parrot/-/97-0001/1997) (PsHV-1).